Reading from the N-terminus, the 227-residue chain is MTHLLQDKIIVRQFNVQPYEPVSLAMHNFTDRRDDKTPDEIWLVQHPRVFTQGQAGKEEHVLMPGDIPVIQSDRGGQVTYHGPGQQVMYVLIDLKRRKLGVRQLVTAIENTVIGTLAHFQIKAHARPDAPGVYVGERKICSLGLRIRKGCSFHGLALNIAMDLSPFLRINPCGYAGMEMTQVSDLVPGVTLDDTSPVLVNTFLQLVGYSAPEFIPWALDVQGEPLPD.

The BPL/LPL catalytic domain maps to Asp-35–Ala-210. Substrate contacts are provided by residues Arg-74 to His-81, Ser-141 to Gly-143, and Gly-154 to Ala-156. Cys-172 (acyl-thioester intermediate) is an active-site residue.

It belongs to the LipB family.

It is found in the cytoplasm. The catalysed reaction is octanoyl-[ACP] + L-lysyl-[protein] = N(6)-octanoyl-L-lysyl-[protein] + holo-[ACP] + H(+). The protein operates within protein modification; protein lipoylation via endogenous pathway; protein N(6)-(lipoyl)lysine from octanoyl-[acyl-carrier-protein]: step 1/2. In terms of biological role, catalyzes the transfer of endogenously produced octanoic acid from octanoyl-acyl-carrier-protein onto the lipoyl domains of lipoate-dependent enzymes. Lipoyl-ACP can also act as a substrate although octanoyl-ACP is likely to be the physiological substrate. The sequence is that of Octanoyltransferase from Pectobacterium atrosepticum (strain SCRI 1043 / ATCC BAA-672) (Erwinia carotovora subsp. atroseptica).